A 166-amino-acid chain; its full sequence is NAD(P)H-quinone oxidoreductase subunit I, chloroplastic (166 aa).

2 4Fe-4S ferredoxin-type domains span residues 55-84 (GRIH…VDWK) and 95-124 (LNYS…MTEE). [4Fe-4S] cluster-binding residues include C64, C67, C70, C74, C104, C107, C110, and C114.

The protein belongs to the complex I 23 kDa subunit family. As to quaternary structure, NDH is composed of at least 16 different subunits, 5 of which are encoded in the nucleus. [4Fe-4S] cluster is required as a cofactor.

It localises to the plastid. The protein localises to the chloroplast thylakoid membrane. It carries out the reaction a plastoquinone + NADH + (n+1) H(+)(in) = a plastoquinol + NAD(+) + n H(+)(out). The catalysed reaction is a plastoquinone + NADPH + (n+1) H(+)(in) = a plastoquinol + NADP(+) + n H(+)(out). Functionally, NDH shuttles electrons from NAD(P)H:plastoquinone, via FMN and iron-sulfur (Fe-S) centers, to quinones in the photosynthetic chain and possibly in a chloroplast respiratory chain. The immediate electron acceptor for the enzyme in this species is believed to be plastoquinone. Couples the redox reaction to proton translocation, and thus conserves the redox energy in a proton gradient. The protein is NAD(P)H-quinone oxidoreductase subunit I, chloroplastic of Steiractinia sodiroi.